The primary structure comprises 318 residues: Biotin synthase (318 aa).

The 230-residue stretch at 44–273 (LCGNKFDLCT…TVQIRLAGGR (230 aa)) folds into the Radical SAM core domain. The [4Fe-4S] cluster site is built by cysteine 62, cysteine 66, and cysteine 69. Residues serine 106, cysteine 138, cysteine 198, and arginine 268 each coordinate [2Fe-2S] cluster.

It belongs to the radical SAM superfamily. Biotin synthase family. Homodimer. The cofactor is [4Fe-4S] cluster. It depends on [2Fe-2S] cluster as a cofactor.

It carries out the reaction (4R,5S)-dethiobiotin + (sulfur carrier)-SH + 2 reduced [2Fe-2S]-[ferredoxin] + 2 S-adenosyl-L-methionine = (sulfur carrier)-H + biotin + 2 5'-deoxyadenosine + 2 L-methionine + 2 oxidized [2Fe-2S]-[ferredoxin]. Its pathway is cofactor biosynthesis; biotin biosynthesis; biotin from 7,8-diaminononanoate: step 2/2. Catalyzes the conversion of dethiobiotin (DTB) to biotin by the insertion of a sulfur atom into dethiobiotin via a radical-based mechanism. This Clostridium botulinum (strain Langeland / NCTC 10281 / Type F) protein is Biotin synthase.